The chain runs to 401 residues: Argininosuccinate synthase (401 aa).

8–16 is an ATP binding site; the sequence is AYSGGLDTS. Position 86 (Y86) interacts with L-citrulline. G116 serves as a coordination point for ATP. Residues T118, N122, and D123 each coordinate L-aspartate. N122 contacts L-citrulline. Positions 126, 174, 258, and 270 each coordinate L-citrulline.

Belongs to the argininosuccinate synthase family. Type 1 subfamily. As to quaternary structure, homotetramer.

Its subcellular location is the cytoplasm. The enzyme catalyses L-citrulline + L-aspartate + ATP = 2-(N(omega)-L-arginino)succinate + AMP + diphosphate + H(+). Its pathway is amino-acid biosynthesis; L-arginine biosynthesis; L-arginine from L-ornithine and carbamoyl phosphate: step 2/3. The sequence is that of Argininosuccinate synthase from Acidothermus cellulolyticus (strain ATCC 43068 / DSM 8971 / 11B).